A 190-amino-acid polypeptide reads, in one-letter code: Succinate dehydrogenase assembly factor 2, mitochondrial (190 aa).

This sequence belongs to the SDHAF2 family. Interacts with the flavoprotein subunit within the SDH catalytic dimer.

The protein localises to the mitochondrion matrix. In terms of biological role, plays an essential role in the assembly of succinate dehydrogenase (SDH), an enzyme complex (also referred to as respiratory complex II) that is a component of both the tricarboxylic acid (TCA) cycle and the mitochondrial electron transport chain, and which couples the oxidation of succinate to fumarate with the reduction of ubiquinone (coenzyme Q) to ubiquinol. Required for flavinylation (covalent attachment of FAD) of the flavoprotein subunit of the SDH catalytic dimer. This Komagataella phaffii (strain GS115 / ATCC 20864) (Yeast) protein is Succinate dehydrogenase assembly factor 2, mitochondrial.